A 134-amino-acid polypeptide reads, in one-letter code: UPF0102 protein Adeh_1910 (134 aa).

The protein belongs to the UPF0102 family.

This chain is UPF0102 protein Adeh_1910, found in Anaeromyxobacter dehalogenans (strain 2CP-C).